Consider the following 261-residue polypeptide: Small ribosomal subunit protein eS4 (261 aa).

Positions Leu42–Asp100 constitute an S4 RNA-binding domain.

Belongs to the eukaryotic ribosomal protein eS4 family.

It is found in the cytoplasm. This Prunus armeniaca (Apricot) protein is Small ribosomal subunit protein eS4 (RPS4).